The primary structure comprises 390 residues: Succinyl-diaminopimelate desuccinylase (390 aa).

His75 provides a ligand contact to Zn(2+). The active site involves Asp77. Asp108 lines the Zn(2+) pocket. The active-site Proton acceptor is Glu141. Residues Glu142, Glu170, and His359 each coordinate Zn(2+).

Belongs to the peptidase M20A family. DapE subfamily. As to quaternary structure, homodimer. It depends on Zn(2+) as a cofactor. Co(2+) is required as a cofactor.

The enzyme catalyses N-succinyl-(2S,6S)-2,6-diaminopimelate + H2O = (2S,6S)-2,6-diaminopimelate + succinate. Its pathway is amino-acid biosynthesis; L-lysine biosynthesis via DAP pathway; LL-2,6-diaminopimelate from (S)-tetrahydrodipicolinate (succinylase route): step 3/3. Functionally, catalyzes the hydrolysis of N-succinyl-L,L-diaminopimelic acid (SDAP), forming succinate and LL-2,6-diaminopimelate (DAP), an intermediate involved in the bacterial biosynthesis of lysine and meso-diaminopimelic acid, an essential component of bacterial cell walls. The sequence is that of Succinyl-diaminopimelate desuccinylase from Maricaulis maris (strain MCS10) (Caulobacter maris).